The chain runs to 372 residues: Queuine tRNA-ribosyltransferase (372 aa).

D89 acts as the Proton acceptor in catalysis. Residues 89–93 (DSGGF), D161, and G232 contribute to the substrate site. The interval 262–268 (GIGDLPS) is RNA binding. Residue D281 is the Nucleophile of the active site. Positions 286-290 (TKAAR) are RNA binding; important for wobble base 34 recognition. Zn(2+)-binding residues include C319, C321, C324, and H351.

Belongs to the queuine tRNA-ribosyltransferase family. As to quaternary structure, homodimer. Within each dimer, one monomer is responsible for RNA recognition and catalysis, while the other monomer binds to the replacement base PreQ1. It depends on Zn(2+) as a cofactor.

The enzyme catalyses 7-aminomethyl-7-carbaguanine + guanosine(34) in tRNA = 7-aminomethyl-7-carbaguanosine(34) in tRNA + guanine. It participates in tRNA modification; tRNA-queuosine biosynthesis. Functionally, catalyzes the base-exchange of a guanine (G) residue with the queuine precursor 7-aminomethyl-7-deazaguanine (PreQ1) at position 34 (anticodon wobble position) in tRNAs with GU(N) anticodons (tRNA-Asp, -Asn, -His and -Tyr). Catalysis occurs through a double-displacement mechanism. The nucleophile active site attacks the C1' of nucleotide 34 to detach the guanine base from the RNA, forming a covalent enzyme-RNA intermediate. The proton acceptor active site deprotonates the incoming PreQ1, allowing a nucleophilic attack on the C1' of the ribose to form the product. After dissociation, two additional enzymatic reactions on the tRNA convert PreQ1 to queuine (Q), resulting in the hypermodified nucleoside queuosine (7-(((4,5-cis-dihydroxy-2-cyclopenten-1-yl)amino)methyl)-7-deazaguanosine). In Chlamydia muridarum (strain MoPn / Nigg), this protein is Queuine tRNA-ribosyltransferase.